The sequence spans 337 residues: Glyceraldehyde-3-phosphate dehydrogenase (337 aa).

Residues 17–18 (RI), Asp39, Lys83, and Ser125 contribute to the NAD(+) site. D-glyceraldehyde 3-phosphate-binding positions include 156–158 (SCT), Thr187, Arg202, 215–216 (TG), and Arg238. Cys157 functions as the Nucleophile in the catalytic mechanism. Asn319 provides a ligand contact to NAD(+).

The protein belongs to the glyceraldehyde-3-phosphate dehydrogenase family. As to quaternary structure, homotetramer.

The protein resides in the cytoplasm. The enzyme catalyses D-glyceraldehyde 3-phosphate + phosphate + NAD(+) = (2R)-3-phospho-glyceroyl phosphate + NADH + H(+). Its pathway is carbohydrate degradation; glycolysis; pyruvate from D-glyceraldehyde 3-phosphate: step 1/5. Its function is as follows. Catalyzes the oxidative phosphorylation of glyceraldehyde 3-phosphate (G3P) to 1,3-bisphosphoglycerate (BPG) using the cofactor NAD. The first reaction step involves the formation of a hemiacetal intermediate between G3P and a cysteine residue, and this hemiacetal intermediate is then oxidized to a thioester, with concomitant reduction of NAD to NADH. The reduced NADH is then exchanged with the second NAD, and the thioester is attacked by a nucleophilic inorganic phosphate to produce BPG. The chain is Glyceraldehyde-3-phosphate dehydrogenase (gapA) from Mycoplasma genitalium (strain ATCC 33530 / DSM 19775 / NCTC 10195 / G37) (Mycoplasmoides genitalium).